We begin with the raw amino-acid sequence, 476 residues long: Transmembrane transporter FPSE_08127 (476 aa).

The helical transmembrane segment at 72–92 threads the bilayer; the sequence is ILAIPAALGALGSIGGSLCII. Asn-111 carries an N-linked (GlcNAc...) asparagine glycan. The next 9 membrane-spanning stretches (helical) occupy residues 133 to 153, 164 to 184, 192 to 212, 231 to 251, 275 to 295, 317 to 337, 364 to 384, 387 to 407, and 431 to 451; these read LVGV…VVAI, GTCT…FSAI, WLTW…VVAV, WAPI…NIFI, ACLV…LVIY, VAYG…QHVA, LGIN…VPIL, LLGL…PALL, and LIMM…VVLI.

The protein belongs to the amino acid/polyamine transporter 2 family.

The protein resides in the membrane. In terms of biological role, transmembrane transporter; part of the Fusarium detoxification of benzoxazolinone cluster involved in the degradation of benzoxazolinones produced by the host plant. Maize, wheat, and rye produce the 2 benzoxazinone phytoanticipins 2,4-dihy-droxy-7-methoxy-1,4-benzoxazin-3-one (DIMBOA) and 2,4-dihydroxy-1,4-benzoxazin-3-one (DIBOA) that, due to their inherent instability once released, spontaneously degrade to the more stable corresponding benzoxazolinones, 6-methoxy-2-benzoxazolinone (MBOA) and 2-benzoxazolinone (BOA), respectively. FPSE_08127 is proposed to shuttle metabolites of benzoxazolinone degradation. The chain is Transmembrane transporter FPSE_08127 from Fusarium pseudograminearum (strain CS3096) (Wheat and barley crown-rot fungus).